Here is a 503-residue protein sequence, read N- to C-terminus: Aspartyl/glutamyl-tRNA(Asn/Gln) amidotransferase subunit B (503 aa).

Belongs to the GatB/GatE family. GatB subfamily. Heterotrimer of A, B and C subunits.

It catalyses the reaction L-glutamyl-tRNA(Gln) + L-glutamine + ATP + H2O = L-glutaminyl-tRNA(Gln) + L-glutamate + ADP + phosphate + H(+). The catalysed reaction is L-aspartyl-tRNA(Asn) + L-glutamine + ATP + H2O = L-asparaginyl-tRNA(Asn) + L-glutamate + ADP + phosphate + 2 H(+). Functionally, allows the formation of correctly charged Asn-tRNA(Asn) or Gln-tRNA(Gln) through the transamidation of misacylated Asp-tRNA(Asn) or Glu-tRNA(Gln) in organisms which lack either or both of asparaginyl-tRNA or glutaminyl-tRNA synthetases. The reaction takes place in the presence of glutamine and ATP through an activated phospho-Asp-tRNA(Asn) or phospho-Glu-tRNA(Gln). The sequence is that of Aspartyl/glutamyl-tRNA(Asn/Gln) amidotransferase subunit B from Nocardia farcinica (strain IFM 10152).